A 267-amino-acid chain; its full sequence is Protein PERCC1 (267 aa).

Disordered stretches follow at residues 19–88 (HHPF…QLLR), 142–163 (SLED…RPGL), and 247–267 (ACPE…PAEA). Residues 28–50 (EPPETSEEEEEEEEEEEEEEGEG) are compositionally biased toward acidic residues. Positions 74-83 (PEGPGSPETP) are enriched in low complexity.

In terms of biological role, plays a critical role in intestinal function. Acts by promoting the development of enteroendocrine cells (EECs) of the gastrointestinal tract and pancreas. It is thereby required for normal enteroendocrine peptide hormone secretion. This Homo sapiens (Human) protein is Protein PERCC1.